Consider the following 89-residue polypeptide: Small ribosomal subunit protein uS15 (89 aa).

It belongs to the universal ribosomal protein uS15 family. In terms of assembly, part of the 30S ribosomal subunit. Forms a bridge to the 50S subunit in the 70S ribosome, contacting the 23S rRNA.

One of the primary rRNA binding proteins, it binds directly to 16S rRNA where it helps nucleate assembly of the platform of the 30S subunit by binding and bridging several RNA helices of the 16S rRNA. Functionally, forms an intersubunit bridge (bridge B4) with the 23S rRNA of the 50S subunit in the ribosome. This is Small ribosomal subunit protein uS15 from Porphyromonas gingivalis (strain ATCC 33277 / DSM 20709 / CIP 103683 / JCM 12257 / NCTC 11834 / 2561).